We begin with the raw amino-acid sequence, 663 residues long: 4-hydroxy-3-methylbut-2-en-1-yl diphosphate synthase (flavodoxin) (663 aa).

[4Fe-4S] cluster-binding residues include Cys568, Cys571, Cys602, and Glu609.

It belongs to the IspG family. Requires [4Fe-4S] cluster as cofactor.

It catalyses the reaction (2E)-4-hydroxy-3-methylbut-2-enyl diphosphate + oxidized [flavodoxin] + H2O + 2 H(+) = 2-C-methyl-D-erythritol 2,4-cyclic diphosphate + reduced [flavodoxin]. It functions in the pathway isoprenoid biosynthesis; isopentenyl diphosphate biosynthesis via DXP pathway; isopentenyl diphosphate from 1-deoxy-D-xylulose 5-phosphate: step 5/6. In terms of biological role, converts 2C-methyl-D-erythritol 2,4-cyclodiphosphate (ME-2,4cPP) into 1-hydroxy-2-methyl-2-(E)-butenyl 4-diphosphate. The chain is 4-hydroxy-3-methylbut-2-en-1-yl diphosphate synthase (flavodoxin) from Leptospira interrogans serogroup Icterohaemorrhagiae serovar copenhageni (strain Fiocruz L1-130).